Reading from the N-terminus, the 167-residue chain is MSNLWRNLKSVRLPFRRAPTLPLYNVPVRRSISSSSSIPPSSSPPPRLTITQRVKELTKKYGWWSLGVYIGISVLDFSASFVLVRTLGAERIGYLEHSILNSIRRYFNWEIPESTASGEPEAYHSSIWTELAFAYGIHKALVVARVPLTAAIVPPLAKRFRGPRIRP.

The protein to A.thaliana At2g20940.

This is an uncharacterized protein from Schizosaccharomyces pombe (strain 972 / ATCC 24843) (Fission yeast).